We begin with the raw amino-acid sequence, 304 residues long: MYQYYPKQCHGEFIEPTYYLISQAWNFKYFRDYLDSFANKLKLVYVGLIDINEYDYIDDPTHVYIFCQSITKELLEKKFNKILLNTEQLSIPKYFDIIKNYLKHLTIIDYSIENIALINDPKVIHIPYQYKETEIAVLKKYYQEIPKQYDVAYCGTMSPRRRLILDQLKSNGVVVMEICQSKWGQERDMLIASCKMLINIHHSDNFNVYESFRCDRWAFAQMPVVSEDSIHDDFLDMKYYSVIKFCPYDKIVDTTLQFLSNVNYPTEEIIETIHTIRYQQLDTAVKQLNSLWNPPHHDDKLLRV.

Belongs to the mimivirus L137 family.

This is an uncharacterized protein from Acanthamoeba polyphaga mimivirus (APMV).